Reading from the N-terminus, the 713-residue chain is Low-density lipoprotein receptor-related protein 10 (713 aa).

Residues Met-1–Ala-17 form the signal peptide. At Arg-18–Lys-441 the chain is on the extracellular side. 2 disulfide bridges follow: Cys-29–Cys-58 and Cys-81–Cys-99. Positions Cys-29–Asp-137 constitute a CUB 1 domain. An N-linked (GlcNAc...) asparagine glycan is attached at Asn-57. An N-linked (GlcNAc...) asparagine glycan is attached at Asn-112. The LDL-receptor class A 1 domain maps to Leu-140–Ser-176. 4 disulfide bridges follow: Cys-141–Cys-153, Cys-148–Cys-166, Cys-160–Cys-175, and Cys-193–Cys-221. Residues Cys-193–Arg-306 form the CUB 2 domain. Residues Asn-194 and Asn-300 are each glycosylated (N-linked (GlcNAc...) asparagine). LDL-receptor class A domains lie at Tyr-308–Pro-355, Gly-356–Arg-398, and His-399–Ser-435. Intrachain disulfides connect Cys-309–Cys-332, Cys-316–Cys-345, Cys-339–Cys-354, Cys-357–Cys-375, Cys-364–Cys-388, Cys-382–Cys-397, Cys-400–Cys-412, Cys-407–Cys-425, and Cys-419–Cys-434. Residues Val-442–Gly-462 form a helical membrane-spanning segment. The Cytoplasmic segment spans residues Cys-463–Ala-713. The segment at Leu-566–Glu-636 is disordered. Position 596 is a phosphothreonine (Thr-596). Positions Pro-614–Ser-626 are enriched in pro residues.

The protein belongs to the LDLR family. As to expression, highly expressed in heart, lung, liver and liver. Expressed at low level in brain and spleen. Weakly or not expressed in testis and skeletal muscle. In liver, it is expressed in hepatocytes and at higher level in sinusoidal lining. In the kidney, it is expressed in peritubular capillaries. In brain, it is expressed in the epithelium of the choroid plexus ependymal cells of the third ventricle pia matter, and to lesser extent in hippocampal fields CA2 and CA3.

The protein resides in the membrane. It localises to the coated pit. Its function is as follows. Probable receptor, which is involved in the internalization of lipophilic molecules and/or signal transduction. May be involved in the uptake of lipoprotein APOE in liver. The sequence is that of Low-density lipoprotein receptor-related protein 10 (Lrp10) from Mus musculus (Mouse).